The sequence spans 216 residues: Ras-related protein RabN1 (216 aa).

GTP is bound at residue 15 to 22; sequence GDYNSGKT. The Effector region motif lies at 37–44; that stretch reads TCPSTFDL. Residues 62 to 66 and 128 to 131 contribute to the GTP site; these read DTAGQ and TKSD. Cys-216 carries S-geranylgeranyl cysteine lipidation.

It belongs to the small GTPase superfamily. Rab family.

The protein resides in the cell membrane. This Dictyostelium discoideum (Social amoeba) protein is Ras-related protein RabN1 (rabN1).